Consider the following 531-residue polypeptide: 2-isopropylmalate synthase (531 aa).

Residues 8 to 284 (IIIFDTTLRD…LTNIDTKQIY (277 aa)) form the Pyruvate carboxyltransferase domain. Residues D17, H208, H210, and N244 each coordinate Mn(2+). Residues 408–531 (RVELVQVSCG…TQDKQTEVTA (124 aa)) are regulatory domain.

The protein belongs to the alpha-IPM synthase/homocitrate synthase family. LeuA type 1 subfamily. As to quaternary structure, homodimer. Mn(2+) is required as a cofactor.

It localises to the cytoplasm. The catalysed reaction is 3-methyl-2-oxobutanoate + acetyl-CoA + H2O = (2S)-2-isopropylmalate + CoA + H(+). It functions in the pathway amino-acid biosynthesis; L-leucine biosynthesis; L-leucine from 3-methyl-2-oxobutanoate: step 1/4. Functionally, catalyzes the condensation of the acetyl group of acetyl-CoA with 3-methyl-2-oxobutanoate (2-ketoisovalerate) to form 3-carboxy-3-hydroxy-4-methylpentanoate (2-isopropylmalate). This is 2-isopropylmalate synthase from Trichormus variabilis (strain ATCC 29413 / PCC 7937) (Anabaena variabilis).